Here is a 512-residue protein sequence, read N- to C-terminus: Zinc metalloprotease mde10 (512 aa).

The N-terminal stretch at 1 to 15 is a signal peptide; the sequence is MRLVLLFSCVLAVSS. Asparagine 35 carries an N-linked (GlcNAc...) asparagine glycan. The Peptidase M12B domain occupies 65–306; that stretch reads QTLWIGVVAD…KYVSLSCLSK (242 aa). Residue histidine 229 coordinates Zn(2+). Glutamate 230 is an active-site residue. Zn(2+) contacts are provided by histidine 233 and histidine 239. 2 disulfide bridges follow: cysteine 246-cysteine 254 and cysteine 374-cysteine 394. In terms of domain architecture, Disintegrin spans 315–402; it reads LGTCGNGIVE…KCPVDENWDD (88 aa). Asparagine 432 is a glycosylation site (N-linked (GlcNAc...) asparagine).

Zn(2+) is required as a cofactor. Post-translationally, glycosylated.

Its subcellular location is the endoplasmic reticulum. The protein localises to the spore wall. Its function is as follows. Has a role in the development of the spore envelope. This chain is Zinc metalloprotease mde10 (mde10), found in Schizosaccharomyces pombe (strain 972 / ATCC 24843) (Fission yeast).